The chain runs to 577 residues: Arginine--tRNA ligase (577 aa).

Positions 132–142 match the 'HIGH' region motif; sequence ANPTGPLHVGH.

The protein belongs to the class-I aminoacyl-tRNA synthetase family. In terms of assembly, monomer.

The protein localises to the cytoplasm. The enzyme catalyses tRNA(Arg) + L-arginine + ATP = L-arginyl-tRNA(Arg) + AMP + diphosphate. This Janthinobacterium sp. (strain Marseille) (Minibacterium massiliensis) protein is Arginine--tRNA ligase.